The following is a 103-amino-acid chain: MSSTIPLAWYLMLSAFLFICGVIGFMIKRNIITIFMCIELMLNAVNLTFVAYATELRSLSGHIFVFFVMVVAAAESAVGLGIIIAVFRSRETLNVDRVNLLKL.

Helical transmembrane passes span 7 to 27 (LAWY…GFMI), 31 to 51 (IITI…TFVA), and 63 to 83 (IFVF…LGII).

The protein belongs to the complex I subunit 4L family. As to quaternary structure, NDH-1 is composed of 14 different subunits. Subunits NuoA, H, J, K, L, M, N constitute the membrane sector of the complex.

The protein resides in the cell inner membrane. The catalysed reaction is a quinone + NADH + 5 H(+)(in) = a quinol + NAD(+) + 4 H(+)(out). Functionally, NDH-1 shuttles electrons from NADH, via FMN and iron-sulfur (Fe-S) centers, to quinones in the respiratory chain. The immediate electron acceptor for the enzyme in this species is believed to be ubiquinone. Couples the redox reaction to proton translocation (for every two electrons transferred, four hydrogen ions are translocated across the cytoplasmic membrane), and thus conserves the redox energy in a proton gradient. This Koribacter versatilis (strain Ellin345) protein is NADH-quinone oxidoreductase subunit K 2.